Here is a 385-residue protein sequence, read N- to C-terminus: S-adenosylmethionine synthase (385 aa).

H15 is an ATP binding site. Residue D17 participates in Mg(2+) binding. E43 provides a ligand contact to K(+). 2 residues coordinate L-methionine: E56 and Q99. The interval 99 to 109 (QSVDIAQGVDR) is flexible loop. ATP contacts are provided by residues 164 to 166 (DAK), 230 to 231 (RF), D239, 245 to 246 (RK), and K266. D239 is an L-methionine binding site. K270 contributes to the L-methionine binding site.

It belongs to the AdoMet synthase family. Homotetramer; dimer of dimers. Mg(2+) is required as a cofactor. Requires K(+) as cofactor.

It is found in the cytoplasm. The enzyme catalyses L-methionine + ATP + H2O = S-adenosyl-L-methionine + phosphate + diphosphate. The protein operates within amino-acid biosynthesis; S-adenosyl-L-methionine biosynthesis; S-adenosyl-L-methionine from L-methionine: step 1/1. Catalyzes the formation of S-adenosylmethionine (AdoMet) from methionine and ATP. The overall synthetic reaction is composed of two sequential steps, AdoMet formation and the subsequent tripolyphosphate hydrolysis which occurs prior to release of AdoMet from the enzyme. In Alkalilimnicola ehrlichii (strain ATCC BAA-1101 / DSM 17681 / MLHE-1), this protein is S-adenosylmethionine synthase.